The primary structure comprises 150 residues: UPF0506 protein SJCHGC09643 (150 aa).

Residues 1–18 (MNTCIQLLILCLVTVINS) form the signal peptide. N-linked (GlcNAc...) asparagine glycans are attached at residues Asn20, Asn32, Asn48, and Asn110. 3 cysteine pairs are disulfide-bonded: Cys116-Cys130, Cys123-Cys134, and Cys129-Cys139.

The protein belongs to the UPF0506 family.

Its subcellular location is the secreted. This chain is UPF0506 protein SJCHGC09643, found in Schistosoma japonicum (Blood fluke).